A 482-amino-acid chain; its full sequence is tRNA sulfurtransferase (482 aa).

Residues 61 to 165 (LTIRDALTRI…DDRLLLIKGR (105 aa)) form the THUMP domain. Residues 183 to 184 (LI), Lys265, Gly287, and Gln296 each bind ATP. Residues Cys344 and Cys456 are joined by a disulfide bond. Residues 404–482 (CGPNDVILDI…GFNNVKVYRP (79 aa)) enclose the Rhodanese domain. The active-site Cysteine persulfide intermediate is the Cys456.

It belongs to the ThiI family.

It localises to the cytoplasm. It catalyses the reaction [ThiI sulfur-carrier protein]-S-sulfanyl-L-cysteine + a uridine in tRNA + 2 reduced [2Fe-2S]-[ferredoxin] + ATP + H(+) = [ThiI sulfur-carrier protein]-L-cysteine + a 4-thiouridine in tRNA + 2 oxidized [2Fe-2S]-[ferredoxin] + AMP + diphosphate. The enzyme catalyses [ThiS sulfur-carrier protein]-C-terminal Gly-Gly-AMP + S-sulfanyl-L-cysteinyl-[cysteine desulfurase] + AH2 = [ThiS sulfur-carrier protein]-C-terminal-Gly-aminoethanethioate + L-cysteinyl-[cysteine desulfurase] + A + AMP + 2 H(+). Its pathway is cofactor biosynthesis; thiamine diphosphate biosynthesis. Catalyzes the ATP-dependent transfer of a sulfur to tRNA to produce 4-thiouridine in position 8 of tRNAs, which functions as a near-UV photosensor. Also catalyzes the transfer of sulfur to the sulfur carrier protein ThiS, forming ThiS-thiocarboxylate. This is a step in the synthesis of thiazole, in the thiamine biosynthesis pathway. The sulfur is donated as persulfide by IscS. The sequence is that of tRNA sulfurtransferase from Shigella dysenteriae serotype 1 (strain Sd197).